A 377-amino-acid polypeptide reads, in one-letter code: Alanine racemase (377 aa).

K33 acts as the Proton acceptor; specific for D-alanine in catalysis. K33 is subject to N6-(pyridoxal phosphate)lysine. R134 is a substrate binding site. Catalysis depends on Y267, which acts as the Proton acceptor; specific for L-alanine. Residue M315 participates in substrate binding.

It belongs to the alanine racemase family. Requires pyridoxal 5'-phosphate as cofactor.

It carries out the reaction L-alanine = D-alanine. Its pathway is amino-acid biosynthesis; D-alanine biosynthesis; D-alanine from L-alanine: step 1/1. Functionally, catalyzes the interconversion of L-alanine and D-alanine. May also act on other amino acids. This Treponema pallidum subsp. pallidum (strain SS14) protein is Alanine racemase (alr).